We begin with the raw amino-acid sequence, 218 residues long: Small ribosomal subunit protein uS3c (218 aa).

One can recognise a KH type-2 domain in the interval 43–118 (IKNYVQKNTK…KFNIAITKIA (76 aa)).

Belongs to the universal ribosomal protein uS3 family. In terms of assembly, part of the 30S ribosomal subunit.

The protein localises to the plastid. Its subcellular location is the chloroplast. This is Small ribosomal subunit protein uS3c (rps3) from Coffea arabica (Arabian coffee).